A 273-amino-acid chain; its full sequence is 2,3,4,5-tetrahydropyridine-2,6-dicarboxylate N-succinyltransferase (273 aa).

2 residues coordinate substrate: Arg-105 and Asp-142.

The protein belongs to the transferase hexapeptide repeat family. In terms of assembly, homotrimer.

It is found in the cytoplasm. It catalyses the reaction (S)-2,3,4,5-tetrahydrodipicolinate + succinyl-CoA + H2O = (S)-2-succinylamino-6-oxoheptanedioate + CoA. Its pathway is amino-acid biosynthesis; L-lysine biosynthesis via DAP pathway; LL-2,6-diaminopimelate from (S)-tetrahydrodipicolinate (succinylase route): step 1/3. The protein is 2,3,4,5-tetrahydropyridine-2,6-dicarboxylate N-succinyltransferase of Bordetella parapertussis (strain 12822 / ATCC BAA-587 / NCTC 13253).